Reading from the N-terminus, the 509-residue chain is Steroid 17-alpha-hydroxylase/17,20 lyase (509 aa).

N202 contacts substrate. C442 contacts heme.

It belongs to the cytochrome P450 family. Requires heme as cofactor.

Its subcellular location is the endoplasmic reticulum membrane. It localises to the microsome membrane. The enzyme catalyses a C21-steroid + reduced [NADPH--hemoprotein reductase] + O2 = a 17alpha-hydroxy-C21-steroid + oxidized [NADPH--hemoprotein reductase] + H2O + H(+). It carries out the reaction progesterone + reduced [NADPH--hemoprotein reductase] + O2 = 17alpha-hydroxyprogesterone + oxidized [NADPH--hemoprotein reductase] + H2O + H(+). The catalysed reaction is pregnenolone + reduced [NADPH--hemoprotein reductase] + O2 = 17alpha-hydroxypregnenolone + oxidized [NADPH--hemoprotein reductase] + H2O + H(+). It catalyses the reaction 17alpha-hydroxyprogesterone + reduced [NADPH--hemoprotein reductase] + O2 = androst-4-ene-3,17-dione + acetate + oxidized [NADPH--hemoprotein reductase] + H2O + 2 H(+). The enzyme catalyses 17alpha-hydroxyprogesterone + reduced [NADPH--hemoprotein reductase] + O2 = 16alpha,17alpha-dihydroxyprogesterone + oxidized [NADPH--hemoprotein reductase] + H2O + H(+). It carries out the reaction 16alpha,17alpha-dihydroxyprogesterone + reduced [NADPH--hemoprotein reductase] + O2 = 6beta,16alpha,17alpha-trihydroxyprogesterone + oxidized [NADPH--hemoprotein reductase] + H2O + H(+). The catalysed reaction is 17alpha-hydroxypregnenolone + reduced [NADPH--hemoprotein reductase] + O2 = 3beta-hydroxyandrost-5-en-17-one + acetate + oxidized [NADPH--hemoprotein reductase] + H2O + 2 H(+). It catalyses the reaction 16alpha,17alpha-dihydroxypregnenolone + reduced [NADPH--hemoprotein reductase] + O2 = 3beta,16alpha-dihydroxy-androst-5-en-17-one + acetate + oxidized [NADPH--hemoprotein reductase] + H2O + 2 H(+). The enzyme catalyses 3beta-hydroxyandrost-5-en-17-one + reduced [NADPH--hemoprotein reductase] + O2 = 3beta,16alpha-dihydroxy-androst-5-en-17-one + oxidized [NADPH--hemoprotein reductase] + H2O + H(+). It carries out the reaction androst-4-ene-3,17-dione + reduced [NADPH--hemoprotein reductase] + O2 = 16alpha-hydroxyandrost-4-ene-3,17-dione + oxidized [NADPH--hemoprotein reductase] + H2O + H(+). Its pathway is steroid hormone biosynthesis. It functions in the pathway steroid biosynthesis; glucocorticoid biosynthesis. Its activity is regulated as follows. Regulated predominantly by intracellular cAMP levels. The 17,20-lyase activity is stimulated by cytochrome b5, which acts as an allosteric effector increasing the Vmax of the lyase activity. In terms of biological role, a cytochrome P450 monooxygenase involved in corticoid and androgen biosynthesis. Catalyzes 17-alpha hydroxylation of C21 steroids, which is common for both pathways. A second oxidative step, required only for androgen synthesis, involves an acyl-carbon cleavage. The 17-alpha hydroxy intermediates, as part of adrenal glucocorticoids biosynthesis pathway, are precursors of cortisol. Hydroxylates steroid hormones, pregnenolone and progesterone to form 17-alpha hydroxy metabolites, followed by the cleavage of the C17-C20 bond to form C19 steroids, dehydroepiandrosterone (DHEA) and androstenedione. Has 16-alpha hydroxylase activity. Catalyzes 16-alpha hydroxylation of 17-alpha hydroxy pregnenolone, followed by the cleavage of the C17-C20 bond to form 16-alpha-hydroxy DHEA. Also 16-alpha hydroxylates androgens, relevant for estriol synthesis. Mechanistically, uses molecular oxygen inserting one oxygen atom into a substrate, and reducing the second into a water molecule, with two electrons provided by NADPH via cytochrome P450 reductase (CPR; NADPH-ferrihemoprotein reductase). This Sus scrofa (Pig) protein is Steroid 17-alpha-hydroxylase/17,20 lyase (CYP17A1).